We begin with the raw amino-acid sequence, 115 residues long: MLGAFNSTLARFGGLVHKVPWRLSQRRKYRHRQRLRAVDEVVDVLRTALQEKNQSCKRIESFVANHQPESQMSPKDKYTMFTRKTQGAGLQGFRKGVHKSPKWTRSTNRVNPTGF.

The transit peptide at 1–23 directs the protein to the mitochondrion; it reads MLGAFNSTLARFGGLVHKVPWRL. The disordered stretch occupies residues 88-115; sequence AGLQGFRKGVHKSPKWTRSTNRVNPTGF. Residues 103–115 show a composition bias toward polar residues; that stretch reads WTRSTNRVNPTGF.

Belongs to the mitochondrion-specific ribosomal protein mL60 family. As to quaternary structure, component of the mitochondrial large ribosomal subunit (mt-LSU). Mature yeast 74S mitochondrial ribosomes consist of a small (37S) and a large (54S) subunit. The 37S small subunit contains a 15S ribosomal RNA (15S mt-rRNA) and at least 32 different proteins. The 54S large subunit contains a 21S rRNA (21S mt-rRNA) and at least 45 different proteins.

Its subcellular location is the mitochondrion. Functionally, component of the mitochondrial ribosome (mitoribosome), a dedicated translation machinery responsible for the synthesis of mitochondrial genome-encoded proteins, including at least some of the essential transmembrane subunits of the mitochondrial respiratory chain. The mitoribosomes are attached to the mitochondrial inner membrane and translation products are cotranslationally integrated into the membrane. This is Large ribosomal subunit protein mL60 (mrpl31) from Schizosaccharomyces pombe (strain 972 / ATCC 24843) (Fission yeast).